A 320-amino-acid chain; its full sequence is Protein U25 (320 aa).

Belongs to the herpesviridae US22 family.

This chain is Protein U25 (U25), found in Human herpesvirus 7 (strain JI) (HHV-7).